A 171-amino-acid polypeptide reads, in one-letter code: ATP synthase subunit b (171 aa).

The helical transmembrane segment at 13 to 33 threads the bilayer; that stretch reads GVEWGTTFVTLVTFVILIILL.

The protein belongs to the ATPase B chain family. F-type ATPases have 2 components, F(1) - the catalytic core - and F(0) - the membrane proton channel. F(1) has five subunits: alpha(3), beta(3), gamma(1), delta(1), epsilon(1). F(0) has three main subunits: a(1), b(2) and c(10-14). The alpha and beta chains form an alternating ring which encloses part of the gamma chain. F(1) is attached to F(0) by a central stalk formed by the gamma and epsilon chains, while a peripheral stalk is formed by the delta and b chains.

Its subcellular location is the cell membrane. F(1)F(0) ATP synthase produces ATP from ADP in the presence of a proton or sodium gradient. F-type ATPases consist of two structural domains, F(1) containing the extramembraneous catalytic core and F(0) containing the membrane proton channel, linked together by a central stalk and a peripheral stalk. During catalysis, ATP synthesis in the catalytic domain of F(1) is coupled via a rotary mechanism of the central stalk subunits to proton translocation. In terms of biological role, component of the F(0) channel, it forms part of the peripheral stalk, linking F(1) to F(0). This is ATP synthase subunit b from Staphylococcus epidermidis (strain ATCC 12228 / FDA PCI 1200).